Consider the following 243-residue polypeptide: Terpene cyclase janB (243 aa).

The next 7 helical transmembrane spans lie at Leu-19–Val-39, Tyr-48–Phe-68, Leu-77–Phe-97, Leu-112–Ala-132, Ile-134–Gly-154, Leu-172–Trp-194, and Leu-205–Trp-225.

It belongs to the paxB family.

The protein resides in the membrane. It participates in secondary metabolite biosynthesis. Terpene cyclase; part of the gene cluster that mediates the biosynthesis of the indole diterpenes janthitremanes such as shearinine K or shearinine A. The geranylgeranyl diphosphate (GGPP) synthase janG catalyzes the first step in janthitremane biosynthesis via conversion of farnesyl pyrophosphate and isopentyl pyrophosphate into geranylgeranyl pyrophosphate (GGPP). Condensation of indole-3-glycerol phosphate with GGPP by the prenyl transferase janC then forms 3-geranylgeranylindole (3-GGI). Epoxidation by the FAD-dependent monooxygenase janM leads to a epoxidized-GGI that is substrate of the terpene cyclase janB for cyclization to yield paspaline. Paspaline is subsequently converted to 13-desoxypaspaline by the cytochrome P450 monooxygenase janP, via beta-PC-M6 in a series of alpha-face oxidations. The cytochrome P450 monooxygenase janQ is proposed to carry out sequential beta-face oxidation steps at C-7 and C-13 of 13-desoxypaspaline to form paspalicine and paspalinine respectively. The indole diterpene prenyltransferase janD may then convert paspalinine into shearinine K which is substrate of janO and/or additional enzymes for oxidation and cyclization to generate shearinine A. This is Terpene cyclase janB from Penicillium janthinellum (Penicillium vitale).